A 255-amino-acid polypeptide reads, in one-letter code: MPTDIFSFKQFDIDQTGCAMRVGTDGVLLGAWAGEDAAGSIPQHCLDIGTGTGLIALMLAQRFPQARVQGIEIDPIAAECARANAAASPFSDRIVIASGDILDSSLESLIGNQRFDLIVSNPPFFKSSMHAPDRQRTMARHEETLPLEKLICRASELLSPQGRLALITPRDRLKDLRLYAATYRLVSSRLTEVRTLPHKEPKRLLSEWRPADTAIDRSPFTDTLIIHPATGYYSPEYVRLTEPFYTTSFRILAVG.

It belongs to the methyltransferase superfamily. tRNA (adenine-N(6)-)-methyltransferase family.

Its subcellular location is the cytoplasm. It carries out the reaction adenosine(37) in tRNA1(Val) + S-adenosyl-L-methionine = N(6)-methyladenosine(37) in tRNA1(Val) + S-adenosyl-L-homocysteine + H(+). Functionally, specifically methylates the adenine in position 37 of tRNA(1)(Val) (anticodon cmo5UAC). This chain is tRNA1(Val) (adenine(37)-N6)-methyltransferase, found in Porphyromonas gingivalis (strain ATCC BAA-308 / W83).